Here is a 337-residue protein sequence, read N- to C-terminus: MRVLGIETSCDETGIAIYDDKKGLLANQLYSQVKLHADYGGVVPELASRDHVRKTVPLIQAALKEAALTASDIDAVAYTAGPGLVGALLVGATVGRSLAFAWNVPAIPVHHMEGHLLAPMLEDNPPDFPFVALLVSGGHTQLISVTGIGQYELLGESIDDAAGEAFDKTAKLLGLDYPGGPMLSKMASQGTAGRFVFPRPMTDRPGLDFSFSGLKTFAANTIRSNGDDEQTRADIARAFEDAVVDTLMIKCKRALESTGFKRLVMAGGVSANRTLRAKLAEMMQKRRGEVFYARPEFCTDNGAMIAYAGMVRFKAGVTADLGVTVRPRWPLAELPAA.

Residues H111 and H115 each contribute to the Fe cation site. Substrate contacts are provided by residues 134–138 (LVSGG), D167, G180, and N272. D300 contacts Fe cation.

It belongs to the KAE1 / TsaD family. Fe(2+) is required as a cofactor.

It is found in the cytoplasm. It catalyses the reaction L-threonylcarbamoyladenylate + adenosine(37) in tRNA = N(6)-L-threonylcarbamoyladenosine(37) in tRNA + AMP + H(+). Required for the formation of a threonylcarbamoyl group on adenosine at position 37 (t(6)A37) in tRNAs that read codons beginning with adenine. Is involved in the transfer of the threonylcarbamoyl moiety of threonylcarbamoyl-AMP (TC-AMP) to the N6 group of A37, together with TsaE and TsaB. TsaD likely plays a direct catalytic role in this reaction. The polypeptide is tRNA N6-adenosine threonylcarbamoyltransferase (Salmonella typhi).